The following is a 79-amino-acid chain: Small ribosomal subunit protein uS17 (79 aa).

The protein belongs to the universal ribosomal protein uS17 family. Part of the 30S ribosomal subunit.

In terms of biological role, one of the primary rRNA binding proteins, it binds specifically to the 5'-end of 16S ribosomal RNA. This Orientia tsutsugamushi (strain Ikeda) (Rickettsia tsutsugamushi) protein is Small ribosomal subunit protein uS17.